The chain runs to 595 residues: Sucrose transport protein SUT4 (595 aa).

Over 1 to 61 (MDSAAGGGGL…PAARTTTTRK (61 aa)) the chain is Cytoplasmic. The tract at residues 29–55 (SLNGGTPRGGSPKDPDATHQQGPPAAR) is disordered. Residues 62-82 (LVLACMVAAGVQFGWALQLSL) traverse the membrane as a helical segment. Topologically, residues 83-97 (LTPYIQTLGIDHAMA) are extracellular. Residues 98–118 (SFIWLCGPITGFVVQPCVGVW) form a helical membrane-spanning segment. The Cytoplasmic segment spans residues 119–130 (SDKCRSKYGRRR). A helical membrane pass occupies residues 131 to 151 (PFILAGCLMICFAVTLIGFSA). Residues 152-173 (DLGYILGDTTEHCSTYKGSRFR) lie on the Extracellular side of the membrane. Residues 174-194 (AAIIFVLGFWMLDLANNTVQG) form a helical membrane-spanning segment. At 195-213 (PARALLADLSGPDQCNSAN) the chain is on the cytoplasmic side. The helical transmembrane segment at 214-234 (AIFCTWMAVGNVLGFSSGASG) threads the bilayer. Residues 235-256 (NWHKWFPFLMTRACCEACSNLK) lie on the Extracellular side of the membrane. The chain crosses the membrane as a helical span at residues 257–277 (AAFLVAVVFLLFCMSVTLYFA). Residues 278 to 365 (EEIPLEPTDA…LTSMRHLPPG (88 aa)) lie on the Cytoplasmic side of the membrane. The disordered stretch occupies residues 291 to 340 (SDSAPLLNGSRDDNNASNEPRNGALPNGHTDGSNVPANSNAEDSNSNREN). Positions 320–334 (TDGSNVPANSNAEDS) are enriched in polar residues. The chain crosses the membrane as a helical span at residues 366–386 (MYSVLLVMALTWLSWFPFFLF). Over 387–417 (DTDWMGREVYHGDPNGNLSERKAYDNGVREG) the chain is Extracellular. Asn403 carries an N-linked (GlcNAc...) asparagine glycan. The chain crosses the membrane as a helical span at residues 418–438 (AFGLLLNSVVLGIGSFLVDPL). Residues 439 to 447 (CRLMGARLV) are Cytoplasmic-facing. Residues 448-468 (WAISNFTVFICMLATAILSWI) traverse the membrane as a helical segment. At 469-491 (SFDLYSSKLHHIIGANKTVKNSA) the chain is on the extracellular side. An N-linked (GlcNAc...) asparagine glycan is attached at Asn484. Residues 492–512 (LIVFSLLGLPLSITYSVPFSV) form a helical membrane-spanning segment. The Cytoplasmic segment spans residues 513–525 (TAELTAGTGGGQG). A helical membrane pass occupies residues 526–546 (LATGVLNLAIVVPQIVVSLGA). Residues 547-556 (GPWDALFGGG) lie on the Extracellular side of the membrane. Residues 557 to 577 (NVPAFALASVFSLGAGVLAVL) form a helical membrane-spanning segment. Residues 578–595 (KLPKLPNSYRSAGFHGFG) are Cytoplasmic-facing.

Belongs to the glycoside-pentoside-hexuronide (GPH) cation symporter transporter (TC 2.A.2.4) family. In terms of assembly, homodimer.

The protein resides in the cell membrane. Its pathway is glycan biosynthesis; sucrose metabolism. Functionally, responsible for the transport of sucrose into the cell, with the concomitant uptake of protons (symport system). May also transport other glucosides. In Oryza sativa subsp. indica (Rice), this protein is Sucrose transport protein SUT4 (SUT4).